The sequence spans 341 residues: HTH-type transcriptional repressor PurR (341 aa).

An HTH lacI-type domain is found at 2–56; that stretch reads ATIKDVAKRAGVSTTTVSHVINKTRFVADETREAVWVAIKELHYSPSAVARSLKV. Residues 4–23 constitute a DNA-binding region (H-T-H motif); sequence IKDVAKRAGVSTTTVSHVIN. A DNA-binding region spans residues 48-56; that stretch reads SAVARSLKV. Hypoxanthine contacts are provided by Tyr73, Arg190, Thr192, Phe221, and Asp275.

Homodimer.

It functions in the pathway purine metabolism; purine nucleotide biosynthesis [regulation]. Functionally, is the main repressor of the genes involved in the de novo synthesis of purine nucleotides, regulating purB, purC, purEK, purF, purHD, purL, purMN and guaBA expression. PurR is allosterically activated to bind its cognate DNA by binding the purine corepressors, hypoxanthine or guanine, thereby effecting transcription repression. The protein is HTH-type transcriptional repressor PurR of Erwinia tasmaniensis (strain DSM 17950 / CFBP 7177 / CIP 109463 / NCPPB 4357 / Et1/99).